We begin with the raw amino-acid sequence, 443 residues long: tRNA modification GTPase MnmE (443 aa).

3 residues coordinate (6S)-5-formyl-5,6,7,8-tetrahydrofolate: Arg-23, Glu-82, and Lys-121. In terms of domain architecture, TrmE-type G spans 215 to 364 (GTSIVLAGHP…LKQFIQQWMQ (150 aa)). K(+) is bound at residue Asn-225. Residues 225–230 (NAGKSS), 244–250 (TDIPGTT), and 269–272 (DSAG) contribute to the GTP site. Ser-229 lines the Mg(2+) pocket. The K(+) site is built by Thr-244, Ile-246, and Thr-249. Mg(2+) is bound at residue Thr-250. Lys-443 is a binding site for (6S)-5-formyl-5,6,7,8-tetrahydrofolate.

This sequence belongs to the TRAFAC class TrmE-Era-EngA-EngB-Septin-like GTPase superfamily. TrmE GTPase family. As to quaternary structure, homodimer. Heterotetramer of two MnmE and two MnmG subunits. It depends on K(+) as a cofactor.

Its subcellular location is the cytoplasm. Exhibits a very high intrinsic GTPase hydrolysis rate. Involved in the addition of a carboxymethylaminomethyl (cmnm) group at the wobble position (U34) of certain tRNAs, forming tRNA-cmnm(5)s(2)U34. This Chlamydia abortus (strain DSM 27085 / S26/3) (Chlamydophila abortus) protein is tRNA modification GTPase MnmE.